The following is a 454-amino-acid chain: tRNA modification GTPase MnmE (454 aa).

The (6S)-5-formyl-5,6,7,8-tetrahydrofolate site is built by arginine 26, glutamate 84, and lysine 123. Residues 219-378 (GLQVVIAGKP…LVDAITAHAG (160 aa)) form the TrmE-type G domain. Asparagine 229 lines the K(+) pocket. Residues 229–234 (NAGKSS), 248–254 (TDIAGTT), and 273–276 (DTAG) each bind GTP. Mg(2+) is bound at residue serine 233. K(+) contacts are provided by threonine 248, isoleucine 250, and threonine 253. Residue threonine 254 coordinates Mg(2+). Residue lysine 454 participates in (6S)-5-formyl-5,6,7,8-tetrahydrofolate binding.

The protein belongs to the TRAFAC class TrmE-Era-EngA-EngB-Septin-like GTPase superfamily. TrmE GTPase family. In terms of assembly, homodimer. Heterotetramer of two MnmE and two MnmG subunits. It depends on K(+) as a cofactor.

The protein resides in the cytoplasm. Exhibits a very high intrinsic GTPase hydrolysis rate. Involved in the addition of a carboxymethylaminomethyl (cmnm) group at the wobble position (U34) of certain tRNAs, forming tRNA-cmnm(5)s(2)U34. In Acinetobacter baumannii (strain ATCC 17978 / DSM 105126 / CIP 53.77 / LMG 1025 / NCDC KC755 / 5377), this protein is tRNA modification GTPase MnmE.